A 113-amino-acid chain; its full sequence is MNDIQIPIIFTDAAAKKVKSLIEGEDNPNLRLRVYITGGGCSGFQYGFTFDDQINEGDLTIENQNVGLVVDPMSLQYLIGGTVDYTEGLDGSRFVVQNPNASSTCGCGSSFSI.

Residues cysteine 41, cysteine 105, and cysteine 107 each coordinate iron-sulfur cluster.

The protein belongs to the HesB/IscA family. As to quaternary structure, homodimer. It depends on iron-sulfur cluster as a cofactor.

Required for insertion of 4Fe-4S clusters for at least IspG. This is Iron-sulfur cluster insertion protein ErpA from Actinobacillus pleuropneumoniae serotype 7 (strain AP76).